The following is a 108-amino-acid chain: Anti-sigma-B factor antagonist (108 aa).

Residues 3–108 enclose the STAS domain; that stretch reads LNIETITHDD…MHVNEGTEVE (106 aa). S57 carries the post-translational modification Phosphoserine.

It belongs to the anti-sigma-factor antagonist family. Post-translationally, phosphorylated by RsbW on a serine residue.

In terms of biological role, positive regulator of sigma-B activity. Non-phosphorylated RsbV binds to RsbW, preventing its association with sigma-B. When phosphorylated, releases RsbW, which is then free to complex with and inactivate sigma-B. This chain is Anti-sigma-B factor antagonist (rsbV), found in Staphylococcus epidermidis.